We begin with the raw amino-acid sequence, 124 residues long: Hydrogenase maturation factor HypA (124 aa).

A Ni(2+)-binding site is contributed by His-2. Zn(2+) is bound by residues Cys-78, Cys-81, Cys-97, and Cys-100.

This sequence belongs to the HypA/HybF family.

Functionally, involved in the maturation of [NiFe] hydrogenases. Required for nickel insertion into the metal center of the hydrogenase. The chain is Hydrogenase maturation factor HypA from Methanocaldococcus jannaschii (strain ATCC 43067 / DSM 2661 / JAL-1 / JCM 10045 / NBRC 100440) (Methanococcus jannaschii).